Here is a 302-residue protein sequence, read N- to C-terminus: tRNA pseudouridine synthase B (302 aa).

The active-site Nucleophile is the D47.

Belongs to the pseudouridine synthase TruB family. Type 1 subfamily.

The enzyme catalyses uridine(55) in tRNA = pseudouridine(55) in tRNA. Responsible for synthesis of pseudouridine from uracil-55 in the psi GC loop of transfer RNAs. The protein is tRNA pseudouridine synthase B of Ruegeria sp. (strain TM1040) (Silicibacter sp.).